The primary structure comprises 284 residues: Sulfotransferase 4A1 (284 aa).

Phosphothreonine is present on residues Thr8, Thr11, and Thr205.

The protein belongs to the sulfotransferase 1 family. Expressed in brain, cerebellum and hypothalamus. Not detected in pancreas, liver, lung, intestine, kidney, uterus, adrenal gland, thymus, spleen, epididymis, testicle, and heart.

The protein localises to the cytoplasm. Atypical sulfotransferase family member with very low affinity for 3'-phospho-5'-adenylyl sulfate (PAPS) and very low catalytic activity towards L-triiodothyronine, thyroxine, estrone, p-nitrophenol, 2-naphthylamine, and 2-beta-naphthol. May have a role in the metabolism of drugs and neurotransmitters in the CNS. This chain is Sulfotransferase 4A1 (Sult4a1), found in Mus musculus (Mouse).